Consider the following 138-residue polypeptide: Putative thioredoxin-like protein 453L (138 aa).

Residues 3–138 (QQKYFEKPVY…FNNIVNYVMG (136 aa)) enclose the Thioredoxin domain. Catalysis depends on nucleophile residues C44 and C47. Cysteines 44 and 47 form a disulfide.

Belongs to the thioredoxin family.

Functionally, participates in various redox reactions through the reversible oxidation of its active center dithiol to a disulfide and catalyzes dithiol-disulfide exchange reactions. The polypeptide is Putative thioredoxin-like protein 453L (Acheta domesticus (House cricket)).